Reading from the N-terminus, the 242-residue chain is Protein HTATIP2 (242 aa).

At Ala2 the chain carries N-acetylalanine. The required for interaction with elongation factor EEF1A1 stretch occupies residues 2-25; that stretch reads ADKEALPKLREDFKMQNKSVFILG. NADPH-binding residues include Ser27, Gly28, Glu29, Thr30, Arg52, Arg53, Leu92, Gly93, Tyr143, Lys147, Leu170, and Arg178. Tyr143 serves as the catalytic Proton acceptor. Residue Lys147 is part of the active site.

As to quaternary structure, monomer. Forms homodimers during oxidative stress. Interacts (via N-terminus) with elongation factor EEF1A1 (via middle-region); the interaction is direct and competes with EEF1A1 binding to guanyl-nucleotide exchange factor EEF1B2, thereby inhibiting GDP for GTP exchange and reactivation of EEF1A1. Interacts with nuclear transport receptors XPO4, IPO5/RANBP5, IPO7, IPO9 and KPNB1 as well as GCN1L1/GCN1 and LRPPRC probably through their HEAT repeats. Binds NCOA5/CIA.

Its subcellular location is the cytoplasm. Its function is as follows. Represses translation by preventing reactivation of elongation factor eEF1A. May also inhibit nuclear import by competing with nuclear import substrates for binding to a subset of nuclear transport receptors. Has additionally been proposed to act as a redox sensor involved in cellular oxidative stress surveillance. The sequence is that of Protein HTATIP2 from Mus musculus (Mouse).